The chain runs to 479 residues: Serine carboxypeptidase-like 29 (479 aa).

An N-terminal signal peptide occupies residues 1–28 (MAKTRGSCCLVNALIAIAFLATAHLCEA). Asparagine 47 and asparagine 144 each carry an N-linked (GlcNAc...) asparagine glycan. Cystine bridges form between cysteine 93/cysteine 349, cysteine 254/cysteine 266, and cysteine 290/cysteine 317. The active site involves serine 186. A glycan (N-linked (GlcNAc...) asparagine) is linked at asparagine 293. Active-site residues include aspartate 386 and histidine 438.

The protein belongs to the peptidase S10 family. As to expression, expressed in seedlings, roots, leaves and flowers.

It localises to the secreted. In terms of biological role, probable carboxypeptidase. The chain is Serine carboxypeptidase-like 29 (SCPL29) from Arabidopsis thaliana (Mouse-ear cress).